A 307-amino-acid chain; its full sequence is Synaptophysin (307 aa).

Topologically, residues 1 to 19 are cytoplasmic; sequence MDVVNQLVAGGQFRVVKEP. The 208-residue stretch at 15 to 222 folds into the MARVEL domain; it reads VVKEPLGFVK…NLWFVFKETG (208 aa). The chain crosses the membrane as a helical span at residues 20–43; it reads LGFVKVLQWVFAIFAFATCGSYTG. Over 44-101 the chain is Vesicular; that stretch reads ELRLSVECANKTESALNIEVEFEYPFRLHQVYFDAPSCVKGGTTKIFLVGDYSSSAEF. N-linked (GlcNAc...) asparagine glycosylation occurs at asparagine 53. A Phosphotyrosine modification is found at tyrosine 75. The chain crosses the membrane as a helical span at residues 102–125; sequence FVTVAVFAFLYSMGALATYIFLQN. The Cytoplasmic segment spans residues 126 to 132; sequence KYRENNK. The chain crosses the membrane as a helical span at residues 133-156; that stretch reads GPMMDFLATAVFAFMWLVSSSAWA. At 157–194 the chain is on the vesicular side; the sequence is KGLSDVKMATDPENIIKEMPMCRQTGNTCKELRDPVTS. Residues 195 to 218 traverse the membrane as a helical segment; it reads GLNTSVVFGFLNLVLWVGNLWFVF. The Cytoplasmic portion of the chain corresponds to 219–307; the sequence is KETGWAAPFM…GAPTSFSNQM (89 aa). Threonine 221 carries the post-translational modification Phosphothreonine. The interval 233–307 is disordered; sequence GAPEKQPAPG…GAPTSFSNQM (75 aa). The span at 248–258 shows a compositional bias: gly residues; the sequence is AGYGQGPGGYG. Residues 249 to 298 form a repeats, Gly-rich region; it reads GYGQGPGGYGPQDSYGPQGGYQPDYGQPASGGGGYGPQGDYGQQGYGQQG. The span at 259–276 shows a compositional bias: low complexity; the sequence is PQDSYGPQGGYQPDYGQP. A phosphotyrosine mark is found at tyrosine 273 and tyrosine 289. Positions 277–296 are enriched in gly residues; it reads ASGGGGYGPQGDYGQQGYGQ.

Belongs to the synaptophysin/synaptobrevin family. Homohexamer or homotetramer. Interacts with SRCIN1. Interacts with VAMP2; the interaction is inhibited by interaction of VAPM2 with SEPT8. Post-translationally, ubiquitinated; mediated by SIAH1 or SIAH2 and leading to its subsequent proteasomal degradation. Phosphorylated by SRC. In terms of tissue distribution, expressed in the brain with expression in the cerebrum and the cerebellum.

It is found in the cytoplasmic vesicle. Its subcellular location is the secretory vesicle. The protein localises to the synaptic vesicle membrane. The protein resides in the synapse. It localises to the synaptosome. Possibly involved in structural functions as organizing other membrane components or in targeting the vesicles to the plasma membrane. Involved in the regulation of short-term and long-term synaptic plasticity. This Rattus norvegicus (Rat) protein is Synaptophysin (Syp).